The sequence spans 544 residues: Chaperonin GroEL (544 aa).

ATP is bound by residues 30-33 (TLGP), lysine 51, 87-91 (DGTTT), glycine 415, 479-481 (NAA), and aspartate 495.

This sequence belongs to the chaperonin (HSP60) family. As to quaternary structure, forms a cylinder of 14 subunits composed of two heptameric rings stacked back-to-back. Interacts with the co-chaperonin GroES.

Its subcellular location is the cytoplasm. It carries out the reaction ATP + H2O + a folded polypeptide = ADP + phosphate + an unfolded polypeptide.. Together with its co-chaperonin GroES, plays an essential role in assisting protein folding. The GroEL-GroES system forms a nano-cage that allows encapsulation of the non-native substrate proteins and provides a physical environment optimized to promote and accelerate protein folding. This chain is Chaperonin GroEL, found in Francisella tularensis subsp. holarctica (strain FTNF002-00 / FTA).